The sequence spans 112 residues: Large ribosomal subunit protein uL22 (112 aa).

The protein belongs to the universal ribosomal protein uL22 family. Part of the 50S ribosomal subunit.

Functionally, this protein binds specifically to 23S rRNA; its binding is stimulated by other ribosomal proteins, e.g. L4, L17, and L20. It is important during the early stages of 50S assembly. It makes multiple contacts with different domains of the 23S rRNA in the assembled 50S subunit and ribosome. The globular domain of the protein is located near the polypeptide exit tunnel on the outside of the subunit, while an extended beta-hairpin is found that lines the wall of the exit tunnel in the center of the 70S ribosome. The polypeptide is Large ribosomal subunit protein uL22 (Lawsonia intracellularis (strain PHE/MN1-00)).